The sequence spans 219 residues: Proteasome subunit beta type-9 (219 aa).

A propeptide spans 1-20 (MLRAGAPTAGSFRTKEVHTG) (removed in mature form). T21 acts as the Nucleophile in catalysis. An N6-acetyllysine mark is found at K53 and K109.

It belongs to the peptidase T1B family. In terms of assembly, the 26S proteasome consists of a 20S proteasome core and two 19S regulatory subunits. The 20S proteasome core is composed of 28 subunits that are arranged in four stacked rings, resulting in a barrel-shaped structure. The two end rings are each formed by seven alpha subunits, and the two central rings are each formed by seven beta subunits. The catalytic chamber with the active sites is on the inside of the barrel. Component of the immunoproteasome, where it displaces the equivalent housekeeping subunit PSMB6. Component of the spermatoproteasome, a form of the proteasome specifically found in testis. Autocleaved. The resulting N-terminal Thr residue of the mature subunit is responsible for the nucleophile proteolytic activity.

Its subcellular location is the cytoplasm. It is found in the nucleus. The catalysed reaction is Cleavage of peptide bonds with very broad specificity.. Functionally, the proteasome is a multicatalytic proteinase complex which is characterized by its ability to cleave peptides with Arg, Phe, Tyr, Leu, and Glu adjacent to the leaving group at neutral or slightly basic pH. The proteasome has an ATP-dependent proteolytic activity. This subunit is involved in antigen processing to generate class I binding peptides. This is Proteasome subunit beta type-9 (Psmb9) from Mus platythrix (Flat-haired mouse).